A 140-amino-acid polypeptide reads, in one-letter code: ATP synthase epsilon chain (140 aa).

It belongs to the ATPase epsilon chain family. F-type ATPases have 2 components, CF(1) - the catalytic core - and CF(0) - the membrane proton channel. CF(1) has five subunits: alpha(3), beta(3), gamma(1), delta(1), epsilon(1). CF(0) has three main subunits: a, b and c.

Its subcellular location is the cell inner membrane. Its function is as follows. Produces ATP from ADP in the presence of a proton gradient across the membrane. The protein is ATP synthase epsilon chain of Chromobacterium violaceum (strain ATCC 12472 / DSM 30191 / JCM 1249 / CCUG 213 / NBRC 12614 / NCIMB 9131 / NCTC 9757 / MK).